Consider the following 1607-residue polypeptide: Phosphatidylinositol 3-kinase piki-1 (1607 aa).

Residues 2-21 (SDDEELQLAIEISKKTFKDE) enclose the UIM domain. Disordered stretches follow at residues 54 to 91 (EANSPGPSSYSGSLATSPIDFRPVYNEPRAGPIPHSQS), 105 to 128 (STSQPPAFPPPPRPPKPEQYKFPP), and 142 to 182 (PPPP…SFAS). Over residues 58–69 (PGPSSYSGSLAT) the composition is skewed to polar residues. A compositionally biased stretch (pro residues) spans 158 to 169 (PPVPIHPTPPVS). The PI3K-RBD domain maps to 362–453 (ASTVKVVVYK…GDDVKLDLGV (92 aa)). The 169-residue stretch at 598-766 (KMDFLQIMLN…KIWDTEIYFP (169 aa)) folds into the C2 PI3K-type domain. One can recognise a PIK helical domain in the interval 776 to 953 (PQDFATLDIE…AIRCQNLQQK (178 aa)). The region spanning 1029-1303 (RIEECSVFNS…MIQNSLGSAF (275 aa)) is the PI3K/PI4K catalytic domain. The segment at 1035 to 1041 (VFNSNAK) is G-loop. A catalytic loop region spans residues 1168 to 1176 (GIGDRHNDN). Positions 1187-1213 (HIDFGKYMGDWQMAAGFRRDRVPFVFT) are activation loop. The region spanning 1344–1458 (GRISRVTVLK…TFFHSILRDN (115 aa)) is the PX domain. Residues 1472–1601 (SQCQIYLKIE…KNCRTLEGWF (130 aa)) form the C2 domain.

This sequence belongs to the PI3/PI4-kinase family.

The protein localises to the cell projection. The protein resides in the phagocytic cup. Its subcellular location is the cytoplasmic vesicle. It is found in the phagosome membrane. It localises to the cytoplasm. The catalysed reaction is a 1,2-diacyl-sn-glycero-3-phospho-(1D-myo-inositol) + ATP = a 1,2-diacyl-sn-glycero-3-phospho-(1D-myo-inositol-3-phosphate) + ADP + H(+). Phosphatidylinositol 3-kinase involved in clearance of apoptotic cell corpses by phagosomes. Phagosome maturation requires two sequential and non-overlapping pulses of phosphatidylinositol-3-phosphate (PI3P) on the vesicle surface which mediates recruitment of sortins snx-1 and lst-4 and small GTPases rab-5, rab-2 and rab-7. The first pulse is initiated by piki-1, then maintained by vps-34 which also produces the second pulse. Unlike vps-34, not involved in the formation of PI3P in early endosomes. The protein is Phosphatidylinositol 3-kinase piki-1 of Caenorhabditis elegans.